Consider the following 1088-residue polypeptide: Protocadherin-19 (1088 aa).

The first 24 residues, 1–24 (MHSKDMDFVQMFVCFLLCWTGVDA), serve as a signal peptide directing secretion. The Extracellular segment spans residues 25–678 (VFNLKYTVEE…QEQIGPVNLS (654 aa)). 6 Cadherin domains span residues 31–130 (TVEE…APRF), 131–239 (PTNH…NPVF), 240–347 (DEPV…APEI), 351–454 (SENS…PPYF), 455–563 (TKPH…TPVM), and 569–676 (VNGT…GPVN). Residues E34 and E35 each coordinate Ca(2+). N44 carries N-linked (GlcNAc...) asparagine glycosylation. D89 and D91 together coordinate Ca(2+). C94 and C100 form a disulfide bridge. D122, V123, N124, D125, N126, E141, D156, D158, N162, E200, D213, D231, S232, N233, D234, N235, and E250 together coordinate Ca(2+). An N-linked (GlcNAc...) asparagine glycan is attached at N262. D265, D267, and N271 together coordinate Ca(2+). A glycan (N-linked (GlcNAc...) asparagine) is linked at N284. Residues D306, E308, D339, I340, N341, D342, N343, E361, and D376 each contribute to the Ca(2+) site. The N-linked (GlcNAc...) asparagine glycan is linked to N377. 4 residues coordinate Ca(2+): D378, N382, D413, and E415. N421 is a glycosylation site (N-linked (GlcNAc...) asparagine). Ca(2+) contacts are provided by D428, D446, E447, N448, D449, N450, E465, D480, D482, N486, N522, E524, and D537. N486 carries an N-linked (GlcNAc...) asparagine glycan. N546 carries N-linked (GlcNAc...) asparagine glycosylation. The Ca(2+) site is built by D555, V556, N557, D558, and N559. An N-linked (GlcNAc...) asparagine glycan is attached at N570. Ca(2+) contacts are provided by D594, D596, N600, and D646. N676 is a glycosylation site (N-linked (GlcNAc...) asparagine). Residues 679 to 699 (LIFIIALGSIAVILFVTMIFV) traverse the membrane as a helical segment. The Cytoplasmic portion of the chain corresponds to 700-1088 (AVKCKRDNKE…GSKRLKDIVL (389 aa)). Disordered regions lie at residues 792 to 813 (NSRN…GPQQ), 851 to 875 (DMEG…HDVQ), 970 to 1032 (TFGK…ASST), and 1067 to 1088 (TLLQ…DIVL). Residues 859 to 875 (DSGHEESDQTDSEHDVQ) show a composition bias toward basic and acidic residues. Positions 1071–1088 (DGRDKESPGSKRLKDIVL) are enriched in basic and acidic residues.

As to quaternary structure, homodimer; antiparallel. Interacts with cadherin cdh2; the interaction confers robust cell adhesion activity on pcdh19. As to expression, in the embryo, strongly expressed in the developing nervous system. At 12 hours post fertilization (hpf), shows a segmental expression pattern in the anterior third of the neural keel with strong expression in the presumptive forebrain, cerebellum/rhombomere 1 and rhombomere 4. By 24 hpf, expressed widely in the brain and spinal cord with higher expression levels in the ventral telencephalon, dorsal and central thalamus, optic tectum, central tegmentum, cerebellum and dorsolateral regions of the hindbrain. As development proceeds, expression becomes restricted to the dorsal and/or lateral regions of the central nervous system. Not detected in the spinal cord of two- and three-day old embryos. Expressed in the eye primordium, developing retina, lens and otic vesicle. Expressed in the larval optic tectum at 4 days post-fertilization where it localizes in discrete columns of neurons. Expressed throughout the adult brain with strong expression in the ventromedial telencephalon, periventricular regions of the thalamus and anterior hypothalamus, stratum periventriculare of the optic tectum, dorsal tegmental nucleus, granular regions of the cerebellar body and valvula, and superficial layers of the facial and vagal lobes.

The protein localises to the cell membrane. Functionally, calcium-dependent cell-adhesion protein. Essential for the early stages of neurulation in the anterior neural plate. Shows little cell adhesion activity on its own but exhibits robust homophilic cell adhesion when in a complex with cadherin cdh2 and appears to mediate the adhesion while cdh2 acts as a cell adhesion cofactor in the complex. Functions with cdh2 to coordinate cell adhesion and cell movements during neurulation. Contributes to neural progenitor cell patterning with cdh2 by promoting homophilic cell interactions. Regulates the columnar organization of neurons in the optic tectum. In Danio rerio (Zebrafish), this protein is Protocadherin-19.